The sequence spans 175 residues: Transcriptional activatory protein BadR (175 aa).

The HTH marR-type domain occupies 20–156 (ANRLFFRLYQ…TLHYLLKILD (137 aa)).

Functionally, transcriptional activator of genes for the anaerobic degradation of benzoate. This is Transcriptional activatory protein BadR (badR) from Rhodopseudomonas palustris (strain ATCC BAA-98 / CGA009).